The following is a 121-amino-acid chain: uncharacterized protein (121 aa).

Residues 1 to 121 (MGQVLSICSS…QQEREQIKWD (121 aa)) form a disordered region. Residue glycine 2 is the site of N-myristoyl glycine attachment. Cysteine 8 carries S-palmitoyl cysteine lipidation. 4 stretches are compositionally biased toward basic and acidic residues: residues 11-23 (KSKEKKVVNEKPT), 73-83 (AAEKRNIEKKK), 90-105 (RQLEKERAKPMKEHLQ), and 112-121 (QQEREQIKWD).

The protein to yeast YGL108C. In terms of processing, myristoylated. Post-translationally, the N-myristoylated protein is further palmitoylated.

The protein resides in the cytoplasm. Its subcellular location is the cytosol. This is an uncharacterized protein from Schizosaccharomyces pombe (strain 972 / ATCC 24843) (Fission yeast).